The primary structure comprises 639 residues: Bone morphogenetic protein 1 homolog (639 aa).

An N-terminal signal peptide occupies residues 1–23 (MDLLYYMTVSLLGFILSLTTFIG). The propeptide occupies 24–109 (ETTRALSDDV…RAVTARPERR (86 aa)). One can recognise a Peptidase M12A domain in the interval 100–305 (RAVTARPERR…IQANLLYKCP (206 aa)). Asn122 and Asn140 each carry an N-linked (GlcNAc...) asparagine glycan. Cystine bridges form between Cys143/Cys304, Cys167/Cys189, Cys169/Cys170, Cys307/Cys333, Cys360/Cys382, and Cys420/Cys446. A Zn(2+)-binding site is contributed by His197. The active site involves Glu198. Zn(2+) contacts are provided by His201 and His207. CUB domains lie at 307–419 (CGRT…YEAI) and 420–531 (CGGH…DFFK). A glycan (N-linked (GlcNAc...) asparagine) is linked at Asn317. N-linked (GlcNAc...) asparagine glycosylation occurs at Asn455. Disulfide bonds link Cys473–Cys495, Cys536–Cys548, Cys544–Cys557, and Cys559–Cys572. The region spanning 532-573 (EKDECAQPDQGGCMDVCVNTIGSYRCDCRPGYELSSDGRRCE) is the EGF-like; calcium-binding domain.

Requires Zn(2+) as cofactor. As to expression, ectodermal and primary mesenchyme cells in hatched blastula.

This chain is Bone morphogenetic protein 1 homolog, found in Strongylocentrotus purpuratus (Purple sea urchin).